Consider the following 253-residue polypeptide: Tryptophan synthase alpha chain (253 aa).

Active-site proton acceptor residues include Glu-45 and Asp-56.

It belongs to the TrpA family. In terms of assembly, tetramer of two alpha and two beta chains.

The catalysed reaction is (1S,2R)-1-C-(indol-3-yl)glycerol 3-phosphate + L-serine = D-glyceraldehyde 3-phosphate + L-tryptophan + H2O. It functions in the pathway amino-acid biosynthesis; L-tryptophan biosynthesis; L-tryptophan from chorismate: step 5/5. Its function is as follows. The alpha subunit is responsible for the aldol cleavage of indoleglycerol phosphate to indole and glyceraldehyde 3-phosphate. This Flavobacterium psychrophilum (strain ATCC 49511 / DSM 21280 / CIP 103535 / JIP02/86) protein is Tryptophan synthase alpha chain.